The following is a 1281-amino-acid chain: Zinc finger transcription factor Trps1 (1281 aa).

Disordered regions lie at residues 1-101 (MVRK…VSFP) and 116-204 (PAAG…KGDL). Polar residues-rich tracts occupy residues 21–31 (LEPTATESKVS) and 40–49 (DQMSENTDQS). Lysine 29 is covalently cross-linked (Glycyl lysine isopeptide (Lys-Gly) (interchain with G-Cter in SUMO2)). 2 positions are modified to phosphoserine: serine 90 and serine 127. Over residues 148–162 (LETKEEHKMSPKATE) the composition is skewed to basic and acidic residues. Polar residues predominate over residues 166 to 189 (PVQSGQANCQGLSPVSVASKNPQV). Phosphoserine is present on residues serine 178 and serine 216. The segment at 222-247 (FKCNICGYGYYGNDPTDLIKHFRKYH) adopts a C2H2-type 1; atypical zinc-finger fold. A Glycyl lysine isopeptide (Lys-Gly) (interchain with G-Cter in SUMO2) cross-link involves residue lysine 263. A C2H2-type 2; atypical zinc finger spans residues 333–358 (FRCKFCNFTYMGNSSTELEQHFLQTH). The segment at 365 to 393 (SLPSSEGVKPSEKNSNKSIPALRASDSGD) is disordered. Residues lysine 418, lysine 457, lysine 474, and lysine 488 each participate in a glycyl lysine isopeptide (Lys-Gly) (interchain with G-Cter in SUMO2) cross-link. The tract at residues 484–515 (NDLAKSVEGEPLTKPEKGLSGAKKKDFPSKGA) is disordered. The span at 488-515 (KSVEGEPLTKPEKGLSGAKKKDFPSKGA) shows a compositional bias: basic and acidic residues. Residues 614 to 637 (HQCHQCSFSTPDVDVLLFHYETVH) form a C2H2-type 3; atypical zinc finger. Residues 635–819 (TVHESQASDV…SLGLLTPVSS (185 aa)) are mediates interaction with GLI3. A Glycyl lysine isopeptide (Lys-Gly) (interchain with G-Cter in SUMO2) cross-link involves residue lysine 645. C2H2-type zinc fingers lie at residues 666 to 689 (HSCT…RRAH) and 692 to 715 (YKCR…NTVH). Glycyl lysine isopeptide (Lys-Gly) (interchain with G-Cter in SUMO2) cross-links involve residues lysine 737 and lysine 755. A Glycyl lysine isopeptide (Lys-Gly) (interchain with G-Cter in SUMO1); alternate cross-link involves residue lysine 766. A Glycyl lysine isopeptide (Lys-Gly) (interchain with G-Cter in SUMO2); alternate cross-link involves residue lysine 766. Residues lysine 825 and lysine 850 each participate in a glycyl lysine isopeptide (Lys-Gly) (interchain with G-Cter in SUMO2) cross-link. The disordered stretch occupies residues 856 to 885 (APAGSEKSASLTQQYPASGESKTKDESQSL). Polar residues predominate over residues 862 to 871 (KSASLTQQYP). Residues lysine 877 and lysine 879 each participate in a glycyl lysine isopeptide (Lys-Gly) (interchain with G-Cter in SUMO2) cross-link. The segment at 896–920 (CANCLTTKTSLWRKNANGGYVCNAC) adopts a GATA-type zinc-finger fold. Residues lysine 925, lysine 937, and lysine 965 each participate in a glycyl lysine isopeptide (Lys-Gly) (interchain with G-Cter in SUMO2) cross-link. The segment covering 961-977 (EQLNKQQRGSGEEQVNG) has biased composition (polar residues). A disordered region spans residues 961 to 1000 (EQLNKQQRGSGEEQVNGSPLERRSEDHLSESHPREIPLPS). Position 978 is a phosphoserine (serine 978). Positions 980–995 (LERRSEDHLSESHPRE) are enriched in basic and acidic residues. The tract at residues 985 to 1184 (EDHLSESHPR…PTANGASKEK (200 aa)) is mediates interaction with RNF4. Glycyl lysine isopeptide (Lys-Gly) (interchain with G-Cter in SUMO2) cross-links involve residues lysine 1003, lysine 1012, lysine 1030, and lysine 1040. Over residues 1040-1049 (KSPQESTGDP) the composition is skewed to polar residues. The disordered stretch occupies residues 1040–1078 (KSPQESTGDPGNSSSVSDGKGSSERGSPIEKYMRPAKHP). Serine 1041 is modified (phosphoserine). Over residues 1050–1059 (GNSSSVSDGK) the composition is skewed to low complexity. Basic and acidic residues predominate over residues 1060-1072 (GSSERGSPIEKYM). Serine 1066 is modified (phosphoserine). Residue lysine 1070 forms a Glycyl lysine isopeptide (Lys-Gly) (interchain with G-Cter in SUMO2) linkage. The residue at position 1085 (serine 1085) is a Phosphoserine. Residues 1163–1281 (PLDLAIKHSR…QAEKNGKPKE (119 aa)) are transcriptional repressor domain. A disordered region spans residues 1169-1195 (KHSRPGPTANGASKEKTKAPPTVKNED). Residues lysine 1192 and lysine 1201 each participate in a glycyl lysine isopeptide (Lys-Gly) (interchain with G-Cter in SUMO2); alternate cross-link. Glycyl lysine isopeptide (Lys-Gly) (interchain with G-Cter in SUMO); alternate cross-links involve residues lysine 1192 and lysine 1201. Residue lysine 1201 forms a Glycyl lysine isopeptide (Lys-Gly) (interchain with G-Cter in SUMO1); alternate linkage. C2H2-type zinc fingers lie at residues 1215 to 1237 (TKCV…MSCH) and 1243 to 1267 (FQCS…RGLH).

Interacts with RNF4; regulates TRPS1 repressor activity. Interacts specifically with the activator form of GLI3 (GLI3A) but not with the repressor form (GLI3R). In terms of processing, sumoylated. Sumoylation in the repressor domain inhibits the transcription repression activity. Sumoylation on Lys-1201 is the major site. Appears to be sumoylated on multiple sites. In the embryo, expression is detected in both visceral and skeletal tissues. Found in the maxilla, mandible, snout, prospective phalanges and in the femoral head within the developing hip. Also expressed in the hair follicles.

The protein resides in the nucleus. Its function is as follows. Transcriptional repressor. Binds specifically to GATA sequences and represses expression of GATA-regulated genes at selected sites and stages in vertebrate development. Regulates chondrocyte proliferation and differentiation. Executes multiple functions in proliferating chondrocytes, expanding the region of distal chondrocytes, activating proliferation in columnar cells and supporting the differentiation of columnar into hypertrophic chondrocytes. This chain is Zinc finger transcription factor Trps1 (Trps1), found in Mus musculus (Mouse).